Here is a 404-residue protein sequence, read N- to C-terminus: Phospho-N-acetylmuramoyl-pentapeptide-transferase (404 aa).

A run of 10 helical transmembrane segments spans residues 30–50, 73–93, 100–120, 132–152, 209–229, 242–262, 274–294, 301–321, 326–346, and 381–401; these read SAAILSLCISIFLGKRLIIFF, IPTMGGIIIIAATVVPTLLFA, IMLLLISIIWMGLIGFIDDYI, GKFKIVGQVALGVIVGITLIF, YMWIVYVLFMIFIIAAVSNGA, TSAIIGTTLAILAYVSGNVIF, LAELAIFCTAFVGACVGFLWY, IFMGDTGSLAIGSVIAVLAIV, LMIPLLCGIFFIETLSVIIQV, and KIVTRFWIVGIVLAILSLVTL.

This sequence belongs to the glycosyltransferase 4 family. MraY subfamily. Requires Mg(2+) as cofactor.

Its subcellular location is the cell inner membrane. The catalysed reaction is UDP-N-acetyl-alpha-D-muramoyl-L-alanyl-gamma-D-glutamyl-meso-2,6-diaminopimeloyl-D-alanyl-D-alanine + di-trans,octa-cis-undecaprenyl phosphate = di-trans,octa-cis-undecaprenyl diphospho-N-acetyl-alpha-D-muramoyl-L-alanyl-D-glutamyl-meso-2,6-diaminopimeloyl-D-alanyl-D-alanine + UMP. Its pathway is cell wall biogenesis; peptidoglycan biosynthesis. Its function is as follows. Catalyzes the initial step of the lipid cycle reactions in the biosynthesis of the cell wall peptidoglycan: transfers peptidoglycan precursor phospho-MurNAc-pentapeptide from UDP-MurNAc-pentapeptide onto the lipid carrier undecaprenyl phosphate, yielding undecaprenyl-pyrophosphoryl-MurNAc-pentapeptide, known as lipid I. This is Phospho-N-acetylmuramoyl-pentapeptide-transferase from Amoebophilus asiaticus (strain 5a2).